Here is a 317-residue protein sequence, read N- to C-terminus: Glycine--tRNA ligase alpha subunit (317 aa).

It belongs to the class-II aminoacyl-tRNA synthetase family. Tetramer of two alpha and two beta subunits.

It is found in the cytoplasm. The catalysed reaction is tRNA(Gly) + glycine + ATP = glycyl-tRNA(Gly) + AMP + diphosphate. The sequence is that of Glycine--tRNA ligase alpha subunit from Leptothrix cholodnii (strain ATCC 51168 / LMG 8142 / SP-6) (Leptothrix discophora (strain SP-6)).